A 153-amino-acid chain; its full sequence is Aspartate carbamoyltransferase regulatory chain (153 aa).

Residues Cys109, Cys114, Cys138, and Cys141 each coordinate Zn(2+).

It belongs to the PyrI family. As to quaternary structure, contains catalytic and regulatory chains. Zn(2+) is required as a cofactor.

Involved in allosteric regulation of aspartate carbamoyltransferase. This Salmonella paratyphi A (strain ATCC 9150 / SARB42) protein is Aspartate carbamoyltransferase regulatory chain.